Reading from the N-terminus, the 110-residue chain is Large ribosomal subunit protein uL22 (110 aa).

This sequence belongs to the universal ribosomal protein uL22 family. Part of the 50S ribosomal subunit.

In terms of biological role, this protein binds specifically to 23S rRNA; its binding is stimulated by other ribosomal proteins, e.g. L4, L17, and L20. It is important during the early stages of 50S assembly. It makes multiple contacts with different domains of the 23S rRNA in the assembled 50S subunit and ribosome. Functionally, the globular domain of the protein is located near the polypeptide exit tunnel on the outside of the subunit, while an extended beta-hairpin is found that lines the wall of the exit tunnel in the center of the 70S ribosome. The sequence is that of Large ribosomal subunit protein uL22 from Shewanella loihica (strain ATCC BAA-1088 / PV-4).